Here is an 83-residue protein sequence, read N- to C-terminus: Arminin 4364 (83 aa).

A signal peptide spans 1-18 (MKTVFAILFLAFIALTYA). Positions 19 to 55 (RSYEDVKEEIKNEVEKEILEDLEKETDELNERKINDA) are excised as a propeptide. Valine amide is present on Val-80.

It belongs to the arminin family. Expressed in entodermal epithelium along the body column.

The protein resides in the secreted. It localises to the target cell membrane. In terms of biological role, antimicrobial peptide with a broad-spectrum antimicrobial activity. Keeps its antibacterial activity under a wide range of salt concentrations that mimic physiological conditions of human blood, which is surprising, since Hydra is an obligate freshwater animal with nearly no salt tolerance. Does not affect red blood cells. The polypeptide is Arminin 4364 (Hydra vulgaris (Hydra)).